The following is a 468-amino-acid chain: Aldehyde dehydrogenase family 3 member B1 (468 aa).

Position 1 is an N-acetylmethionine (Met1). 188–193 contributes to the NAD(+) binding site; it reads GNPQVG. Residues Glu210 and Cys244 contribute to the active site. Cys463 carries S-palmitoyl cysteine lipidation. Cys465 is modified (cysteine methyl ester). A lipid anchor (S-geranylgeranyl cysteine) is attached at Cys465. A propeptide spans 466 to 468 (removed in mature form); that stretch reads TLL.

The protein belongs to the aldehyde dehydrogenase family. Dually lipidated in the C-terminus; prenylation occurs prior to, and is a prerequisite for palmitoylation. It is also required for activity towards long-chain substrates.

Its subcellular location is the cell membrane. It catalyses the reaction an aldehyde + NAD(+) + H2O = a carboxylate + NADH + 2 H(+). The catalysed reaction is a long-chain fatty aldehyde + NAD(+) + H2O = a long-chain fatty acid + NADH + 2 H(+). It carries out the reaction a medium-chain fatty aldehyde + NAD(+) + H2O = a medium-chain fatty acid + NADH + 2 H(+). The enzyme catalyses octanal + NAD(+) + H2O = octanoate + NADH + 2 H(+). It catalyses the reaction nonanal + NAD(+) + H2O = nonanoate + NADH + 2 H(+). The catalysed reaction is hexadecanoate + NADH + 2 H(+) = hexadecanal + NAD(+) + H2O. It carries out the reaction (2E)-octenal + NAD(+) + H2O = (2E)-octenoate + NADH + 2 H(+). The enzyme catalyses (E)-non-2-enal + NAD(+) + H2O = (E)-non-2-enoate + NADH + 2 H(+). It catalyses the reaction (E)-4-hydroxynon-2-enal + NAD(+) + H2O = (E)-4-hydroxynon-2-enoate + NADH + 2 H(+). The catalysed reaction is (2E)-hexadecenal + NAD(+) + H2O = (E)-hexadec-2-enoate + NADH + 2 H(+). It carries out the reaction benzaldehyde + NAD(+) + H2O = benzoate + NADH + 2 H(+). The enzyme catalyses an aldehyde + NADP(+) + H2O = a carboxylate + NADPH + 2 H(+). It catalyses the reaction a medium-chain fatty aldehyde + NADP(+) + H2O = a medium-chain fatty acid + NADPH + 2 H(+). The catalysed reaction is hexanal + NADP(+) + H2O = hexanoate + NADPH + 2 H(+). It carries out the reaction octanal + NADP(+) + H2O = octanoate + NADPH + 2 H(+). The enzyme catalyses nonanal + NADP(+) + H2O = nonanoate + NADPH + 2 H(+). It catalyses the reaction (2E)-octenal + NADP(+) + H2O = (2E)-octenoate + NADPH + 2 H(+). The catalysed reaction is (E)-non-2-enal + NADP(+) + H2O = (E)-non-2-enoate + NADPH + 2 H(+). It carries out the reaction (E)-4-hydroxynon-2-enal + NADP(+) + H2O = (E)-4-hydroxynon-2-enoate + NADPH + 2 H(+). The enzyme catalyses benzaldehyde + NADP(+) + H2O = benzoate + NADPH + 2 H(+). The protein operates within alcohol metabolism; ethanol degradation; acetate from ethanol: step 2/2. Oxidizes medium and long chain saturated and unsaturated fatty aldehydes generated in the plasma membrane into non-toxic fatty acids. May have a protective role against the cytotoxicity induced by lipid peroxidation. Short-chain fatty aldehydes are not good substrates. Can use both NADP(+) and NAD(+) as electron acceptor in vitro, however in vivo preference will depend on their tissue levels. Low activity towards acetaldehyde and 3,4-dihydroxyphenylacetaldehyde. Able to metabolize aromatic aldehydes such as benzaldehyde to their acid form. The sequence is that of Aldehyde dehydrogenase family 3 member B1 (ALDH3B1) from Bos taurus (Bovine).